Consider the following 540-residue polypeptide: Glucose-6-phosphate isomerase (540 aa).

Glu351 functions as the Proton donor in the catalytic mechanism. Catalysis depends on residues His382 and Lys506.

The protein belongs to the GPI family.

The protein resides in the cytoplasm. The enzyme catalyses alpha-D-glucose 6-phosphate = beta-D-fructose 6-phosphate. It participates in carbohydrate biosynthesis; gluconeogenesis. Its pathway is carbohydrate degradation; glycolysis; D-glyceraldehyde 3-phosphate and glycerone phosphate from D-glucose: step 2/4. Functionally, catalyzes the reversible isomerization of glucose-6-phosphate to fructose-6-phosphate. The chain is Glucose-6-phosphate isomerase from Corynebacterium glutamicum (strain ATCC 13032 / DSM 20300 / JCM 1318 / BCRC 11384 / CCUG 27702 / LMG 3730 / NBRC 12168 / NCIMB 10025 / NRRL B-2784 / 534).